Consider the following 118-residue polypeptide: Large ribosomal subunit protein bL20 (118 aa).

The protein belongs to the bacterial ribosomal protein bL20 family.

In terms of biological role, binds directly to 23S ribosomal RNA and is necessary for the in vitro assembly process of the 50S ribosomal subunit. It is not involved in the protein synthesizing functions of that subunit. This chain is Large ribosomal subunit protein bL20, found in Pseudomonas syringae pv. syringae (strain B728a).